The sequence spans 334 residues: tRNA N6-adenosine threonylcarbamoyltransferase (334 aa).

Fe cation contacts are provided by His-107 and His-111. Residues 129-133, Asp-162, Gly-175, and Asn-269 contribute to the substrate site; that span reads LVSGG. Fe cation is bound at residue Asp-297.

It belongs to the KAE1 / TsaD family. It depends on Fe(2+) as a cofactor.

It localises to the cytoplasm. It carries out the reaction L-threonylcarbamoyladenylate + adenosine(37) in tRNA = N(6)-L-threonylcarbamoyladenosine(37) in tRNA + AMP + H(+). Functionally, required for the formation of a threonylcarbamoyl group on adenosine at position 37 (t(6)A37) in tRNAs that read codons beginning with adenine. Is involved in the transfer of the threonylcarbamoyl moiety of threonylcarbamoyl-AMP (TC-AMP) to the N6 group of A37, together with TsaE and TsaB. TsaD likely plays a direct catalytic role in this reaction. This is tRNA N6-adenosine threonylcarbamoyltransferase from Campylobacter concisus (strain 13826).